The sequence spans 153 residues: Ubiquitin-conjugating enzyme E2 36 (153 aa).

One can recognise a UBC core domain in the interval 5 to 151 (NLPRRIIKET…AKEWTRLYAS (147 aa)). The active-site Glycyl thioester intermediate is Cys89.

It belongs to the ubiquitin-conjugating enzyme family. Interacts with yeast and human Mms2, with the RING domain of RGLG2 and with UEV1A, UEV1B, UEV1C and UEV1D. As to expression, ubiquitously expressed at low level.

The catalysed reaction is S-ubiquitinyl-[E1 ubiquitin-activating enzyme]-L-cysteine + [E2 ubiquitin-conjugating enzyme]-L-cysteine = [E1 ubiquitin-activating enzyme]-L-cysteine + S-ubiquitinyl-[E2 ubiquitin-conjugating enzyme]-L-cysteine.. The protein operates within protein modification; protein ubiquitination. Catalyzes the synthesis of non-canonical poly-ubiquitin chains that are linked through 'Lys-63'. This type of poly-ubiquitination does not lead to protein degradation by the proteasome. Mediates transcriptional activation of target genes. Required for postreplication repair of UV-damaged DNA and for adapting root developmental programs to suboptimal availability of iron. This is Ubiquitin-conjugating enzyme E2 36 (UBC36) from Arabidopsis thaliana (Mouse-ear cress).